We begin with the raw amino-acid sequence, 230 residues long: MRLPPLIAGTLVRRYKRFLADVILEDGSPVTVHCPNSGSMKGCASPGSRVLLSRSANPGRAYPLTWELVESDGCWAGINTSLPNRLVREAIENGTVVELRGYDSIRPEVAYGQRSRIDLLLEGPAGRCYVEVKNVTLVEGERALFPDAVTVRGQKHLNELMRVVREGDRGVIFFTVQRGDAESVSPADAIDPEYGRLLRLALDSGVEALAYRAVVSPEEIRLKERLPVIL.

This sequence belongs to the SfsA family.

The chain is Sugar fermentation stimulation protein homolog from Pelobacter propionicus (strain DSM 2379 / NBRC 103807 / OttBd1).